Consider the following 130-residue polypeptide: MTRTSVLADALNAINNAEKTGKRQVLIRPSSKVIIKFLTVMQKHGYIGEFEYIDDHRSGKIVVQLNGRLNKCGVIQPRFNVKINDIERWTDNLLPARQFGYVILTTSAGIMDHEEARRKHVSGKILGFVY.

It belongs to the universal ribosomal protein uS8 family. In terms of assembly, component of the small ribosomal subunit (SSU). Mature ribosomes consist of a small (40S) and a large (60S) subunit. The 40S subunit contains about 32 different proteins and 1 molecule of RNA (18S). The 60S subunit contains 45 different proteins and 3 molecules of RNA (25S, 5.8S and 5S).

Its subcellular location is the cytoplasm. Functionally, component of the ribosome, a large ribonucleoprotein complex responsible for the synthesis of proteins in the cell. The small ribosomal subunit (SSU) binds messenger RNAs (mRNAs) and translates the encoded message by selecting cognate aminoacyl-transfer RNA (tRNA) molecules. The large subunit (LSU) contains the ribosomal catalytic site termed the peptidyl transferase center (PTC), which catalyzes the formation of peptide bonds, thereby polymerizing the amino acids delivered by tRNAs into a polypeptide chain. The nascent polypeptides leave the ribosome through a tunnel in the LSU and interact with protein factors that function in enzymatic processing, targeting, and the membrane insertion of nascent chains at the exit of the ribosomal tunnel. This is Small ribosomal subunit protein uS8A (RPS22A) from Candida albicans (strain SC5314 / ATCC MYA-2876) (Yeast).